Consider the following 2138-residue polypeptide: Protein virilizer homolog (2138 aa).

Disordered stretches follow at residues R1503–V1574, N1638–Q1664, P1855–G1881, P2013–S2035, and Y2058–G2094. Over residues E1528 to Q1541 the composition is skewed to polar residues. Polar residues-rich tracts occupy residues D1862–G1881 and Q2025–S2035.

Belongs to the vir family. As to quaternary structure, interacts with MTB, FIP37 and HAKAI. Associates with MTA, MTB, FIP37 and HAKAI to form the m6A writer complex which is essential for adenosine methylation at specific mRNA sequences.

The protein resides in the nucleus speckle. It is found in the nucleus. It localises to the nucleoplasm. Its function is as follows. Subunit of the N6-methyltransferase complex, a multiprotein complex that mediates N6-methyladenosine (m6A) methylation at the 5'-[AG]GAC-3' consensus sites of some mRNAs. Associates with MTA, MTB, FIP37 and HAKAI to form the m6A writer complex which is essential for adenosine methylation at specific mRNA sequences. N6-methyladenosine (m6A) plays a role in mRNA stability, processing, translation efficiency and editing. In Arabidopsis thaliana (Mouse-ear cress), this protein is Protein virilizer homolog.